A 287-amino-acid chain; its full sequence is Transmembrane protein 71 (287 aa).

A disordered region spans residues 1–25 (MYRDSPLMSTPVANDSRSDEGPSGK). 2 consecutive transmembrane segments (helical) span residues 218-238 (AGLM…LVIS) and 244-264 (FVGG…IAYV).

Belongs to the TMEM71 family.

Its subcellular location is the membrane. The chain is Transmembrane protein 71 (Tmem71) from Mus musculus (Mouse).